Reading from the N-terminus, the 542-residue chain is Quinidine resistance protein 2 (542 aa).

Topologically, residues 1–67 (MAGATSSIIR…SFKTVLIAQC (67 aa)) are cytoplasmic. S21 carries the post-translational modification Phosphoserine. T38 is modified (phosphothreonine). S40 is subject to Phosphoserine. The chain crosses the membrane as a helical span at residues 68 to 88 (AFTGFFSTIAGAIYYPVLSVI). The Extracellular segment spans residues 89–100 (ERKFDIDEELVN). A helical transmembrane segment spans residues 101-121 (VTVVVYFVFQGLAPTFMGGFA). Over 122 to 127 (DSLGRR) the chain is Cytoplasmic. Residues 128–148 (PVVLVAIVIYFGACIGLACAQ) form a helical membrane-spanning segment. A topological domain (extracellular) is located at residue T149. Residues 150–170 (YAQIIVLRCLQAAGISPVIAI) form a helical membrane-spanning segment. Topologically, residues 171–187 (NSGIMGDVTTRAERGGY) are cytoplasmic. A helical transmembrane segment spans residues 188–208 (VGYVAGFQVLGSAFGALIGAG). Residues 209–216 (LSSRWGWR) lie on the Extracellular side of the membrane. A helical transmembrane segment spans residues 217 to 237 (AIFWFLAIGSGICFLASFLIL). The Cytoplasmic portion of the chain corresponds to 238–300 (PETKRNISGN…APFKILKAYE (63 aa)). A helical membrane pass occupies residues 301 to 321 (ICILMLVAGLQFAMYTTHLTA). The Extracellular segment spans residues 322 to 333 (LSTALSKQYHLT). A helical membrane pass occupies residues 334-354 (VAKVGLCYLPSGICTLCSIVI). At 355 to 413 (AGRYLNWNYRRRLKYYQNWLGKKRSKLLEEHDNDLNLVQRIIENDPKYTFNIFKARLQP) the chain is on the cytoplasmic side. The chain crosses the membrane as a helical span at residues 414–434 (AFVTLLLSSSGFCAYGWCITV). Residues 435-437 (KAP) are Extracellular-facing. A helical transmembrane segment spans residues 438 to 458 (LAAVLCMSGFASLFSNCILTF). At 459-472 (STTLIVDLFPTKTS) the chain is on the cytoplasmic side. Residues 473-493 (TATGCLNLFRCILSAVFIAAL) form a helical membrane-spanning segment. The Extracellular portion of the chain corresponds to 494–503 (SKMVEKMKFG). Residues 504 to 524 (GVFTFLGALTSSSSILLFILL) form a helical membrane-spanning segment. The Cytoplasmic segment spans residues 525-542 (RKGKELAFKRKKQELGVN).

Belongs to the major facilitator superfamily. CAR1 family.

Its subcellular location is the cell membrane. Multidrug resistance transporter involved in resistance and adaptation to quinidine and to the herbicide barban (4-chloro-2-butynyl [3-chlorophenyl] carbamate). Implicated in potassium uptake. The protein is Quinidine resistance protein 2 (QDR2) of Saccharomyces cerevisiae (strain ATCC 204508 / S288c) (Baker's yeast).